The primary structure comprises 278 residues: Serine protease 57 (278 aa).

The first 31 residues, 1 to 31, serve as a signal peptide directing secretion; it reads MVPGTGGGRDCLTLVVATALTQLLWLPGCCG. One can recognise a Peptidase S1 domain in the interval 34–263; the sequence is IVGGHEVKPH…FVSWIWDVVR (230 aa). Cys59 and Cys75 are joined by a disulfide. Residues His74 and Asp122 each act as charge relay system in the active site. N-linked (GlcNAc...) asparagine glycosylation occurs at Asn129. 3 disulfide bridges follow: Cys157–Cys224, Cys188–Cys202, and Cys214–Cys239. Residue Ser218 is the Charge relay system of the active site.

Belongs to the peptidase S1 family. In terms of processing, after cleavage of the signal peptide, the N-terminus is probably further processed by CTSC. Processing by CTSC is probably required for accumulation in cytoplasmic granules; in the absence of CTSC the protein does not accumulate. Post-translationally, N-glycosylated.

The protein resides in the cytoplasmic granule lumen. Its subcellular location is the secreted. Functionally, serine protease that cleaves preferentially after Arg residues. Can also cleave after citrulline (deimidated arginine) and methylarginine residues. This Rattus norvegicus (Rat) protein is Serine protease 57 (Prss57).